Consider the following 993-residue polypeptide: Replication protein 1a (993 aa).

The interval 51–409 (NVLGVKDSEV…TIVINGMSMQ (359 aa)) is methyltransferase. Residues 72–290 (HLTQQEFAPH…HDWENIKSFL (219 aa)) enclose the Alphavirus-like MT domain. The tract at residues 545–576 (SDRPEAPSSTPDDTADVCGKEQEVSELDSLSA) is disordered. A (+)RNA virus helicase ATP-binding domain is found at 687-838 (CVICNSESLS…KIIPDETSDA (152 aa)). The interval 712–975 (VDGVAGCGKT…LTRHKVTFRY (264 aa)) is ATP-dependent helicase. 714–721 (GVAGCGKT) provides a ligand contact to ATP. The 155-residue stretch at 839-993 (DTTFRSPQDV…DLIAECIARA (155 aa)) folds into the (+)RNA virus helicase C-terminal domain.

The protein belongs to the bromoviridae replication protein 1a family. In terms of assembly, interacts with RNA-directed RNA polymerase 2a.

Its subcellular location is the host endoplasmic reticulum membrane. Its function is as follows. Involved in the virus replication. Contains a helicase domain and a methyltransferase domain. The methyltransferase domain is probably involved in viral RNA capping. Involved in the formation of ER membrane spherular invaginations in which RNA replication complexes form. The protein is Replication protein 1a of Cucumis sativus (Cucumber).